A 1303-amino-acid polypeptide reads, in one-letter code: Endoplasmic reticulum transmembrane helix translocase spfA (1303 aa).

The next 2 helical transmembrane spans lie at 25-45 (LHAYVWPFLIIWPAFFAVYLS) and 57-77 (EWTFVWSGSIITAQSLLWLMT). Residues 158–191 (KPPVKVFQQAQGLTSKEEIDRIQHHYGDNTFDIP) form an A-domain; part 1 region. A run of 2 helical transmembrane segments spans residues 201–221 (EHAVAPFFVFQVFCVGLWMLD) and 223–243 (YWYYSLFTLFMLVVFESTVVW). The A-domain; part 2 stretch occupies residues 256-408 (NIKPYDVWVY…LVRTMIYSTE (153 aa)). N-linked (GlcNAc...) asparagine glycosylation occurs at asparagine 287. A helical transmembrane segment spans residues 415-435 (VEALLFILFLLIFAIAAAWYV). A glycan (N-linked (GlcNAc...) asparagine) is linked at asparagine 474. The tract at residues 484-513 (AIFCTEPFRIPFAGRVDVACFDKTGTLTGE) is P-domain; part 1. Aspartate 505 functions as the 4-aspartylphosphate intermediate in the catalytic mechanism. Residues aspartate 505 and threonine 507 each contribute to the Mg(2+) site. ATP is bound at residue 505 to 507 (DKT). Residues 515–721 (LVVDGIAGLT…FAGFLVLQCP (207 aa)) are N-domain. N-linked (GlcNAc...) asparagine glycosylation is present at asparagine 589. Residues phenylalanine 616 and arginine 678 each coordinate ATP. Residues 724-883 (EDAIKAVRML…HVGVALLNGS (160 aa)) are P-domain; part 2. Asparagine 734 carries N-linked (GlcNAc...) asparagine glycosylation. ATP-binding positions include aspartate 746 and 862–866 (DGTND). Aspartate 862 is a binding site for Mg(2+). An arm-like region spans residues 884–1019 (PEDLAKIAEH…ELDDSEPPTI (136 aa)). N-linked (GlcNAc...) asparagine glycosylation occurs at asparagine 958. Residues 1020–1035 (KLGDASVAAPFTSKLA) form a P-domain; part 3 region. A run of 5 helical transmembrane segments spans residues 1060 to 1080 (ILALNCLISAYSLSVIYLDGI), 1082 to 1102 (FGDGQVTISGMLMSVCFLSIS), 1122 to 1142 (VYIIGSVLGQFAIHIATLIYL), 1201 to 1221 (AMYWGLVAASGVAFSCATEFI), and 1239 to 1259 (VTLTVLMIIDYAGCWIIENVL). Residues 1277-1303 (DQLQREMERKKQEELETQAEKERQRKV) form a disordered region.

Belongs to the cation transport ATPase (P-type) (TC 3.A.3) family. Type V subfamily. Requires Mg(2+) as cofactor.

The protein resides in the endoplasmic reticulum membrane. It carries out the reaction [protein]-with a C-terminal TM segment(out) + ATP + H2O = [protein]-with a C-terminal TM segment(in) + ADP + phosphate + H(+). Its activity is regulated as follows. The ATPase activity is stimulated by phosphatidylinositol 4-phosphate (PI4P). Endoplasmic reticulum (ER) translocase required to remove mitochondrial transmembrane proteins mistargeted to the endoplasmic reticulum. Acts as a dislocase that mediates the ATP-dependent extraction of mislocalized mitochondrial transmembrane proteins from the endoplasmic reticulum membrane. Works in concert with the ER Ca(2+) pump srcA to support ER homeostasis. With srcA, also supports redox homeostasis and virulence. This chain is Endoplasmic reticulum transmembrane helix translocase spfA, found in Aspergillus fumigatus (strain ATCC MYA-4609 / CBS 101355 / FGSC A1100 / Af293) (Neosartorya fumigata).